Consider the following 958-residue polypeptide: Atromentin synthetase greA (958 aa).

The adenylation (A) domain stretch occupies residues 60–465 (SIQTKTFSAF…SGRIKDTVIV (406 aa)). The Carrier domain occupies 597 to 675 (APSTETEKAL…SLANYVNALL (79 aa)). A thiolation and peptide carrier (T) domain region spans residues 602–672 (TEKALAKIYA…VVSSLANYVN (71 aa)). Position 634 is an O-(pantetheine 4'-phosphoryl)serine (Ser-634). The tract at residues 698 to 946 (PIFFVHPGVG…MDFDHVPQFQ (249 aa)) is thioesterase (TE) domain.

The protein belongs to the ATP-dependent AMP-binding enzyme family.

It participates in secondary metabolite biosynthesis. In terms of biological role, an L-tyrosine:2-oxoglutarate aminotransferase and atromentin synthetase greA catalyze consecutive steps to turn over L-tyrosine into atromentin, which represents the generic precursor molecule for the entire terphenylquinone and pulvinic acid family of pigments, which are widely distributed secondary metabolites in homobasidiomycetes. The first step catalyzed by the aminotransferase converts L-tyrosine in to 4-hydroxyphenylpyruvate (4-HPP). Adenylation of two 4-HPP monomers by the greA adenylation (A) domain, covalent tethering of the monomers as a thioester and oxoester onto the greA thiolation (T) and thioesterase (TE) domains, respectively, and symmetric C-C-bond formation between two monomers catalyzed by the greA TE domain leads to atromentin. The protein is Atromentin synthetase greA (greA) of Suillus grevillei (Larch bolete).